Consider the following 277-residue polypeptide: DNA-binding transcriptional activator MhpR (277 aa).

Residues 12-74 (VRGLTRGLML…PSDDSFRLTI (63 aa)) form the HTH iclR-type domain. Residues 34-53 (VGLLAELSGLHRTTVRRLLE) constitute a DNA-binding region (H-T-H motif). Residues 89-262 (ISALAAPLLG…AKQIEEGVES (174 aa)) enclose the IclR-ED domain.

Its function is as follows. Activator of the mhpABCDFE operon coding for components of the 3-hydroxyphenylpropionate degradation pathway. In Escherichia coli (strain K12), this protein is DNA-binding transcriptional activator MhpR (mhpR).